Here is a 172-residue protein sequence, read N- to C-terminus: Pre-intermoult gene 1 protein (172 aa).

Positions 1-22 (MKLTKLWLLFVCLGLFVTLVVS) are cleaved as a signal peptide. The segment covering 25 to 45 (TDSDADSDSSADSDSSADSDE) has biased composition (acidic residues). The tract at residues 25–172 (TDSDADSDSS…RRNNNSRRRG (148 aa)) is disordered. A run of 3 repeats spans residues 27-32 (SDADSD), 33-38 (SSADSD), and 39-44 (SSADSD). The 3 X 6 AA tandem repeats of S-S-A-D-S-D stretch occupies residues 27 to 44 (SDADSDSSADSDSSADSD). The segment covering 55–77 (TSTTESSATNSSGSSDDASGSSS) has biased composition (low complexity). Residues 78–95 (DVDDGSDDDTDSGSDTDY) are compositionally biased toward acidic residues. A compositionally biased stretch (basic residues) spans 104 to 172 (VKKRANRKKA…RRNNNSRRRG (69 aa)).

In terms of tissue distribution, low expression in first to third instar larvae salivary glands.

The sequence is that of Pre-intermoult gene 1 protein (Pig1) from Drosophila melanogaster (Fruit fly).